The primary structure comprises 511 residues: Bifunctional purine biosynthesis protein PurH (511 aa).

Positions 1-146 constitute an MGS-like domain; the sequence is MTKRALVSVS…KNHADVTVVV (146 aa).

Belongs to the PurH family.

It carries out the reaction (6R)-10-formyltetrahydrofolate + 5-amino-1-(5-phospho-beta-D-ribosyl)imidazole-4-carboxamide = 5-formamido-1-(5-phospho-D-ribosyl)imidazole-4-carboxamide + (6S)-5,6,7,8-tetrahydrofolate. The catalysed reaction is IMP + H2O = 5-formamido-1-(5-phospho-D-ribosyl)imidazole-4-carboxamide. Its pathway is purine metabolism; IMP biosynthesis via de novo pathway; 5-formamido-1-(5-phospho-D-ribosyl)imidazole-4-carboxamide from 5-amino-1-(5-phospho-D-ribosyl)imidazole-4-carboxamide (10-formyl THF route): step 1/1. The protein operates within purine metabolism; IMP biosynthesis via de novo pathway; IMP from 5-formamido-1-(5-phospho-D-ribosyl)imidazole-4-carboxamide: step 1/1. The polypeptide is Bifunctional purine biosynthesis protein PurH (Shouchella clausii (strain KSM-K16) (Alkalihalobacillus clausii)).